The chain runs to 268 residues: Small ribosomal subunit protein eS1 (268 aa).

The interval 1-21 (MAVGKNKGLSKGGKKGGKKKV) is disordered.

Belongs to the eukaryotic ribosomal protein eS1 family. Component of the small ribosomal subunit. Mature ribosomes consist of a small (40S) and a large (60S) subunit. The 40S subunit contains about 33 different proteins and 1 molecule of RNA (18S). The 60S subunit contains about 49 different proteins and 3 molecules of RNA (28S, 5.8S and 5S).

It is found in the cytoplasm. In terms of biological role, essential for oogenesis; required for late follicle cell development. The polypeptide is Small ribosomal subunit protein eS1 (Drosophila erecta (Fruit fly)).